Reading from the N-terminus, the 20-residue chain is Haemoporin (20 aa).

The segment at 1–20 (AAVPEAAAEATAEAAPVSEF) is disordered.

Homopentamer. Forms a cylindrical structure with a central pore. In terms of tissue distribution, detected in the hemolymph.

The protein localises to the secreted. The sequence is that of Haemoporin from Aplysia californica (California sea hare).